A 188-amino-acid chain; its full sequence is Peptidyl-tRNA hydrolase (188 aa).

Y14 serves as a coordination point for tRNA. Catalysis depends on H19, which acts as the Proton acceptor. Residues Y64, N66, and N112 each contribute to the tRNA site.

The protein belongs to the PTH family. Monomer.

The protein localises to the cytoplasm. It catalyses the reaction an N-acyl-L-alpha-aminoacyl-tRNA + H2O = an N-acyl-L-amino acid + a tRNA + H(+). In terms of biological role, hydrolyzes ribosome-free peptidyl-tRNAs (with 1 or more amino acids incorporated), which drop off the ribosome during protein synthesis, or as a result of ribosome stalling. Functionally, catalyzes the release of premature peptidyl moieties from peptidyl-tRNA molecules trapped in stalled 50S ribosomal subunits, and thus maintains levels of free tRNAs and 50S ribosomes. This chain is Peptidyl-tRNA hydrolase, found in Clostridium tetani (strain Massachusetts / E88).